A 425-amino-acid chain; its full sequence is Inhibin beta A chain (425 aa).

The first 20 residues, 1–20, serve as a signal peptide directing secretion; that stretch reads MPLLWLRGFLLASCWIIVRS. A propeptide spanning residues 21 to 309 is cleaved from the precursor; sequence SPTPGSEGHS…EDHPHRRRRR (289 aa). N-linked (GlcNAc...) asparagine glycosylation occurs at asparagine 165. A disordered region spans residues 260-289; that stretch reads KKRKEEEGEGKKRDGEGGAGGDEEKEQSHR. Over residues 263-275 the composition is skewed to basic and acidic residues; sequence KEEEGEGKKRDGE. 4 cysteine pairs are disulfide-bonded: cysteine 313–cysteine 321, cysteine 320–cysteine 390, cysteine 349–cysteine 422, and cysteine 353–cysteine 424.

The protein belongs to the TGF-beta family. As to quaternary structure, dimeric, linked by one or more disulfide bonds. Inhibin A is a dimer of alpha/INHA and beta-A/INHBA. Activin A is a homodimer of beta-A/INHBA. Activin AB is a dimer of beta-A/INHBA and beta-B/INHBB. Interacts with FST and FSTL3; these interactions prevent activin A interaction to its type II receptor. Activin A interacts with ACVR2A. Activin A interacts with BMPR2. Inhibin A interacts with ACVR1; this interaction creates a non-signaling complex (NSC) that inhibits ACVR1-mediated BMP signaling. Inhibin A interacts with ACVR2A.

It localises to the secreted. In terms of biological role, inhibins/activins are involved in regulating a number of diverse functions such as hypothalamic and pituitary hormone secretion, gonadal hormone secretion, germ cell development and maturation, erythroid differentiation, insulin secretion, nerve cell survival, embryonic axial development or bone growth, depending on their subunit composition. Its function is as follows. Activin A is a homodimer of INHBA that plays a role in several essential biological processes including embryonic development, stem cell maintenance and differentiation, haematopoiesis, cell proliferation and tissue fibrosis. Signals through type I (such as ACVR1B or ACVR1C) and type II receptors (such as ACVR2A, ACVR2B or BMPR2) which, upon ligand binding, phosphorylate SMAD2 and SMAD3 intracellular signaling mediators that form a complex with SMAD4, translocate to the nucleus and modulate gene expression. Can also activate alternative non-canonical intracellular signaling pathways including the p38 MAPK, extracellular signal-regulated kinases 1/2 (ERK1/2) and c-Jun N-terminal kinases (JNKs) to modulate cell migration and differentiation. Alternatively, promotes osteoblastic differentiation via ACVRL1-SMAD1/5/9 pathway. In addition, can engage the type I receptor ACVR1 to form an ACVR1-activin A-type II receptor non-signaling complex (NSC) that renders receptors unavailable for engagement with BMPs, hence resulting in an apparent inhibition of ACVR1-mediated BMP signaling. Functionally, inhibin A is a dimer of alpha/INHA and beta-A/INHBA that functions as a feedback regulator in the hypothalamic-pituitary-gonadal (HPG) axis. Inhibits the secretion of FSH from the anterior pituitary gland by acting on pituitary gonadotrope cells. Antagonizes activin A by binding to the proteoglycan, betaglycan, and forming a stable complex with and, thereby, sequestering type II activin receptors while excluding type I receptor. The chain is Inhibin beta A chain (INHBA) from Ovis aries (Sheep).